Here is a 1427-residue protein sequence, read N- to C-terminus: DNA-directed RNA polymerase subunit beta' (1427 aa).

Zn(2+)-binding residues include Cys70, Cys72, Cys85, and Cys88. Positions 461, 463, and 465 each coordinate Mg(2+). Residues Cys838, Cys912, Cys919, and Cys922 each contribute to the Zn(2+) site.

This sequence belongs to the RNA polymerase beta' chain family. In terms of assembly, the RNAP catalytic core consists of 2 alpha, 1 beta, 1 beta' and 1 omega subunit. When a sigma factor is associated with the core the holoenzyme is formed, which can initiate transcription. Requires Mg(2+) as cofactor. Zn(2+) is required as a cofactor.

It carries out the reaction RNA(n) + a ribonucleoside 5'-triphosphate = RNA(n+1) + diphosphate. Functionally, DNA-dependent RNA polymerase catalyzes the transcription of DNA into RNA using the four ribonucleoside triphosphates as substrates. This Sorangium cellulosum (strain So ce56) (Polyangium cellulosum (strain So ce56)) protein is DNA-directed RNA polymerase subunit beta'.